Consider the following 410-residue polypeptide: LL-diaminopimelate aminotransferase (410 aa).

Substrate is bound by residues Tyr-15 and Gly-42. Pyridoxal 5'-phosphate-binding positions include Tyr-72, 108–109 (SK), Tyr-132, Asn-187, Tyr-218, and 246–248 (SFS). Lys-109, Tyr-132, and Asn-187 together coordinate substrate. An N6-(pyridoxal phosphate)lysine modification is found at Lys-249. Pyridoxal 5'-phosphate is bound by residues Arg-257 and Asn-292. Positions 292 and 388 each coordinate substrate.

Belongs to the class-I pyridoxal-phosphate-dependent aminotransferase family. LL-diaminopimelate aminotransferase subfamily. In terms of assembly, homodimer. Requires pyridoxal 5'-phosphate as cofactor.

The catalysed reaction is (2S,6S)-2,6-diaminopimelate + 2-oxoglutarate = (S)-2,3,4,5-tetrahydrodipicolinate + L-glutamate + H2O + H(+). It functions in the pathway amino-acid biosynthesis; L-lysine biosynthesis via DAP pathway; LL-2,6-diaminopimelate from (S)-tetrahydrodipicolinate (aminotransferase route): step 1/1. Involved in the synthesis of meso-diaminopimelate (m-DAP or DL-DAP), required for both lysine and peptidoglycan biosynthesis. Catalyzes the direct conversion of tetrahydrodipicolinate to LL-diaminopimelate. The chain is LL-diaminopimelate aminotransferase from Geotalea uraniireducens (strain Rf4) (Geobacter uraniireducens).